A 513-amino-acid polypeptide reads, in one-letter code: MVSPLIILLIIWLSVGAKSVEIASINHPCAYAHTVNITDGLRMKDGSYSYAGVVVPPHLMAEYSFKVIDGVEYRAKKHLRGCVCLLKPCISFCCPENLVFDAKHWNCTMPHQVRESTHVELTYANRTVDQVRIRDRFVVRTELGCRNKFVDKKHDNFWQWDLFENGTLRRDNRLWSTDEYCFSPLEHNPEQWELTPLNCERFQTGYRVWIYAICSIIAIIINIFILSLLGSVRDARKSHYGQLIIYYLLSMIVGYSLLVYLALKNPMKLSHVACRNIGFLAYFCIMLSFVFLAICSLDFLLKFKQKAVRSSVRRLSLALAVLAVIGLRFLVSLAQDSKLPKHFKPGMGEDYCWFDVRTWGILIYYYGPIALLLIFSIVCCLKAYFSIYELPPDTQYILGTQLKIVKTHFYAFSAYIVGVFAVWIREIVVYIMARVREHFFIIDFWSGICILGLAIAGFILLLGKNLHVKSWWAINVESSQTDLSIINARVYKFDEKGDLKSSDSPYKPTVTSL.

The first 19 residues, 1-19, serve as a signal peptide directing secretion; that stretch reads MVSPLIILLIIWLSVGAKS. The Extracellular portion of the chain corresponds to 20 to 207; that stretch reads VEIASINHPC…NCERFQTGYR (188 aa). Disulfide bonds link cysteine 29/cysteine 82, cysteine 84/cysteine 89, cysteine 93/cysteine 181, and cysteine 94/cysteine 107. Asparagine 36 is a glycosylation site (N-linked (GlcNAc...) asparagine). N-linked (GlcNAc...) asparagine glycosylation is found at asparagine 106, asparagine 125, and asparagine 165. Residues 208–228 traverse the membrane as a helical segment; sequence VWIYAICSIIAIIINIFILSL. Residues 229-242 lie on the Cytoplasmic side of the membrane; that stretch reads LGSVRDARKSHYGQ. Residues 243–263 traverse the membrane as a helical segment; sequence LIIYYLLSMIVGYSLLVYLAL. Over 264-276 the chain is Extracellular; the sequence is KNPMKLSHVACRN. A helical transmembrane segment spans residues 277-297; sequence IGFLAYFCIMLSFVFLAICSL. Residues 298–314 lie on the Cytoplasmic side of the membrane; sequence DFLLKFKQKAVRSSVRR. A helical membrane pass occupies residues 315 to 335; sequence LSLALAVLAVIGLRFLVSLAQ. Residues 336–360 lie on the Extracellular side of the membrane; it reads DSKLPKHFKPGMGEDYCWFDVRTWG. A helical membrane pass occupies residues 361-381; it reads ILIYYYGPIALLLIFSIVCCL. Residues 382–403 lie on the Cytoplasmic side of the membrane; the sequence is KAYFSIYELPPDTQYILGTQLK. A helical transmembrane segment spans residues 404-424; sequence IVKTHFYAFSAYIVGVFAVWI. Over 425–438 the chain is Extracellular; sequence REIVVYIMARVREH. A helical transmembrane segment spans residues 439-459; the sequence is FFIIDFWSGICILGLAIAGFI. Topologically, residues 460–513 are cytoplasmic; the sequence is LLLGKNLHVKSWWAINVESSQTDLSIINARVYKFDEKGDLKSSDSPYKPTVTSL.

Belongs to the G-protein coupled receptor 2 family. Mth subfamily.

The protein resides in the cell membrane. In Drosophila melanogaster (Fruit fly), this protein is Probable G-protein coupled receptor Mth-like 9 (mthl9).